Consider the following 352-residue polypeptide: Sphingosine 1-phosphate receptor 2 (352 aa).

Residues 1-34 (MGGLYSEYLNPEKVLEHYNYTKETLDMQETTSRK) lie on the Extracellular side of the membrane. The N-linked (GlcNAc...) asparagine glycan is linked to N19. The chain crosses the membrane as a helical span at residues 35–59 (VASAFIIILCCAIVVENLLVLIAVA). At 60-66 (RNSKFHS) the chain is on the cytoplasmic side. The helical transmembrane segment at 67 to 95 (AMYLFLGNLAASDLLAGVAFVANTLLSGH) threads the bilayer. The Extracellular portion of the chain corresponds to 96 to 109 (VTLSLTPVQWFARE). Residues 110-128 (GSAFITLSASVFSLLAIAI) traverse the membrane as a helical segment. The Cytoplasmic portion of the chain corresponds to 129–147 (ERQVALAKVKLYGSDKSCR). A helical transmembrane segment spans residues 148–173 (MLMLIGASWLISLILGGLPILGWNCL). At 174 to 189 (NQLEACSTVLPLYAKH) the chain is on the extracellular side. A helical membrane pass occupies residues 190 to 210 (YVLCVVTIFSVILLAIVALYV). At 211 to 233 (RIYFVVRSSHADVAGPQTLALLK) the chain is on the cytoplasmic side. The chain crosses the membrane as a helical span at residues 234–255 (TVTIVLGVFIICWLPAFSILLL). At 256-271 (DSTCPVRACPVLYKAH) the chain is on the extracellular side. A helical membrane pass occupies residues 272–292 (YFFAFATLNSLLNPVIYTWRS). The Cytoplasmic segment spans residues 293–352 (RDLRREVLRPLQCWRRGKGVTGRRGGNPGHRLLPLRSSSSLERGMHMPTSPTFLEGNTVV). The S-palmitoyl cysteine moiety is linked to residue C305. A disordered region spans residues 333–352 (LERGMHMPTSPTFLEGNTVV).

The protein belongs to the G-protein coupled receptor 1 family. As to expression, most abundant in heart and lung; low, but clearly observed in kidney, liver and thymus; much lower but detectable in brain, testis, stomach and intestine. Not significantly detected in any of the sections of embryonic day (E) 14-18, except in embryonic brain.

It localises to the cell membrane. In terms of biological role, receptor for the lysosphingolipid sphingosine 1-phosphate (S1P). S1P is a bioactive lysophospholipid that elicits diverse physiological effects on most types of cells and tissues. Receptor for the chemokine-like protein FAM19A5. Mediates the inhibitory effect of FAM19A5 on vascular smooth muscle cell proliferation and migration. In lymphoid follicles, couples the binding of S1P to the activation of GNA13 and downstream inhibition of AKT activation leading to suppression of germinal center (GC) B cell growth and migration outside the GC niche. In Mus musculus (Mouse), this protein is Sphingosine 1-phosphate receptor 2 (S1pr2).